A 433-amino-acid polypeptide reads, in one-letter code: Histidinol dehydrogenase (433 aa).

Y130, Q191, and N214 together coordinate NAD(+). 3 residues coordinate substrate: S237, Q259, and H262. The Zn(2+) site is built by Q259 and H262. Residues E327 and H328 each act as proton acceptor in the active site. 4 residues coordinate substrate: H328, D361, E415, and H420. D361 contacts Zn(2+). H420 is a binding site for Zn(2+).

This sequence belongs to the histidinol dehydrogenase family. Requires Zn(2+) as cofactor.

The catalysed reaction is L-histidinol + 2 NAD(+) + H2O = L-histidine + 2 NADH + 3 H(+). The protein operates within amino-acid biosynthesis; L-histidine biosynthesis; L-histidine from 5-phospho-alpha-D-ribose 1-diphosphate: step 9/9. Its function is as follows. Catalyzes the sequential NAD-dependent oxidations of L-histidinol to L-histidinaldehyde and then to L-histidine. The chain is Histidinol dehydrogenase from Ruegeria pomeroyi (strain ATCC 700808 / DSM 15171 / DSS-3) (Silicibacter pomeroyi).